The sequence spans 297 residues: tRNA dimethylallyltransferase (297 aa).

Position 15-22 (15-22 (GPTASGKS)) interacts with ATP. 17–22 (TASGKS) serves as a coordination point for substrate. 2 interaction with substrate tRNA regions span residues 40-43 (DSMQ) and 164-168 (QRIVR).

The protein belongs to the IPP transferase family. In terms of assembly, monomer. The cofactor is Mg(2+).

It carries out the reaction adenosine(37) in tRNA + dimethylallyl diphosphate = N(6)-dimethylallyladenosine(37) in tRNA + diphosphate. Its function is as follows. Catalyzes the transfer of a dimethylallyl group onto the adenine at position 37 in tRNAs that read codons beginning with uridine, leading to the formation of N6-(dimethylallyl)adenosine (i(6)A). This is tRNA dimethylallyltransferase from Rhizobium johnstonii (strain DSM 114642 / LMG 32736 / 3841) (Rhizobium leguminosarum bv. viciae).